The sequence spans 362 residues: UPF0324 membrane protein YPO1307/y2878/YP_1285 (362 aa).

The next 9 membrane-spanning stretches (helical) occupy residues 21-38 (YIPGLVLTGVITGLALNV), 48-70 (GLGALTLAILFGIIVGNTLYPWL), 102-124 (VADVGATGMVIDLLTLSSTFILA), 139-161 (VMLIGAGSSICGAAAIMATEPVL), 168-190 (VAVAVATVVIFGTLAIFVYPWLY), 240-257 (MIRVMMLAPFLLLLSAYL), 278-300 (WFAVIFILMAGFNSLNLLPAVWV), 305-327 (TLDTILLAMAMAALGLTTHIGSI), and 334-356 (PLLLALLLFIWLLVGGTGINLFV).

It belongs to the UPF0324 family.

The protein resides in the cell membrane. The polypeptide is UPF0324 membrane protein YPO1307/y2878/YP_1285 (Yersinia pestis).